The chain runs to 259 residues: Phosphate import ATP-binding protein PstB 1 (259 aa).

The 242-residue stretch at 13 to 254 (IQVRGLEFFY…PSKTQTEDYI (242 aa)) folds into the ABC transporter domain. ATP is bound at residue 45–52 (GPSGCGKS).

The protein belongs to the ABC transporter superfamily. Phosphate importer (TC 3.A.1.7) family. The complex is composed of two ATP-binding proteins (PstB), two transmembrane proteins (PstC and PstA) and a solute-binding protein (PstS).

Its subcellular location is the cell inner membrane. It carries out the reaction phosphate(out) + ATP + H2O = ADP + 2 phosphate(in) + H(+). Its function is as follows. Part of the ABC transporter complex PstSACB involved in phosphate import. Responsible for energy coupling to the transport system. The protein is Phosphate import ATP-binding protein PstB 1 of Pseudomonas syringae pv. tomato (strain ATCC BAA-871 / DC3000).